A 156-amino-acid chain; its full sequence is Peptide deformylase 1 (156 aa).

Fe cation contacts are provided by Cys-90 and His-132. Glu-133 is a catalytic residue. Residue His-136 coordinates Fe cation.

The protein belongs to the polypeptide deformylase family. It depends on Fe(2+) as a cofactor.

It carries out the reaction N-terminal N-formyl-L-methionyl-[peptide] + H2O = N-terminal L-methionyl-[peptide] + formate. Removes the formyl group from the N-terminal Met of newly synthesized proteins. Requires at least a dipeptide for an efficient rate of reaction. N-terminal L-methionine is a prerequisite for activity but the enzyme has broad specificity at other positions. The sequence is that of Peptide deformylase 1 from Bacillus anthracis.